A 60-amino-acid polypeptide reads, in one-letter code: Large ribosomal subunit protein uL30 (60 aa).

The protein belongs to the universal ribosomal protein uL30 family. In terms of assembly, part of the 50S ribosomal subunit.

In Polaromonas naphthalenivorans (strain CJ2), this protein is Large ribosomal subunit protein uL30.